Consider the following 355-residue polypeptide: 3-isopropylmalate dehydrogenase (355 aa).

Substrate contacts are provided by Arg-98, Arg-108, Arg-132, and Asp-223. Residues Asp-223, Asp-247, and Asp-251 each contribute to the Mg(2+) site. 283-295 contributes to the NAD(+) binding site; it reads GSAPDIAGQQKAD.

This sequence belongs to the isocitrate and isopropylmalate dehydrogenases family. LeuB type 2 subfamily. As to quaternary structure, homodimer. Mg(2+) is required as a cofactor. The cofactor is Mn(2+).

It localises to the cytoplasm. The catalysed reaction is (2R,3S)-3-isopropylmalate + NAD(+) = 4-methyl-2-oxopentanoate + CO2 + NADH. It functions in the pathway amino-acid biosynthesis; L-leucine biosynthesis; L-leucine from 3-methyl-2-oxobutanoate: step 3/4. Its function is as follows. Catalyzes the oxidation of 3-carboxy-2-hydroxy-4-methylpentanoate (3-isopropylmalate) to 3-carboxy-4-methyl-2-oxopentanoate. The product decarboxylates to 4-methyl-2 oxopentanoate. This chain is 3-isopropylmalate dehydrogenase, found in Clavibacter sepedonicus (Clavibacter michiganensis subsp. sepedonicus).